The chain runs to 441 residues: Xaa-Pro dipeptidase (441 aa).

Residues Asp244, Asp255, His336, Glu381, and Glu420 each contribute to the Mn(2+) site.

It belongs to the peptidase M24B family. Bacterial-type prolidase subfamily. The cofactor is Mn(2+).

It catalyses the reaction Xaa-L-Pro dipeptide + H2O = an L-alpha-amino acid + L-proline. Functionally, splits dipeptides with a prolyl residue in the C-terminal position. In Xanthomonas oryzae pv. oryzae (strain MAFF 311018), this protein is Xaa-Pro dipeptidase.